The primary structure comprises 346 residues: Ferredoxin--NADP reductase (346 aa).

The FAD site is built by E35, Q43, Y48, V88, F122, D287, and T327.

This sequence belongs to the ferredoxin--NADP reductase type 2 family. Homodimer. FAD is required as a cofactor.

The catalysed reaction is 2 reduced [2Fe-2S]-[ferredoxin] + NADP(+) + H(+) = 2 oxidized [2Fe-2S]-[ferredoxin] + NADPH. The chain is Ferredoxin--NADP reductase from Oenococcus oeni (strain ATCC BAA-331 / PSU-1).